The sequence spans 179 residues: Large ribosomal subunit protein uL5 (179 aa).

Belongs to the universal ribosomal protein uL5 family. Part of the 50S ribosomal subunit; part of the 5S rRNA/L5/L18/L25 subcomplex. Contacts the 5S rRNA and the P site tRNA. Forms a bridge to the 30S subunit in the 70S ribosome.

In terms of biological role, this is one of the proteins that bind and probably mediate the attachment of the 5S RNA into the large ribosomal subunit, where it forms part of the central protuberance. In the 70S ribosome it contacts protein S13 of the 30S subunit (bridge B1b), connecting the 2 subunits; this bridge is implicated in subunit movement. Contacts the P site tRNA; the 5S rRNA and some of its associated proteins might help stabilize positioning of ribosome-bound tRNAs. The sequence is that of Large ribosomal subunit protein uL5 from Tolumonas auensis (strain DSM 9187 / NBRC 110442 / TA 4).